Here is a 229-residue protein sequence, read N- to C-terminus: Dephospho-CoA kinase (229 aa).

A DPCK domain is found at 3-203 (TVGLTGGIGS…ARRDAKATAK (201 aa)). An ATP-binding site is contributed by 11-16 (GSGKSA). The tract at residues 203 to 229 (KATAKAETVASGTDTAASGTDTAAPAG) is disordered.

Belongs to the CoaE family.

Its subcellular location is the cytoplasm. The catalysed reaction is 3'-dephospho-CoA + ATP = ADP + CoA + H(+). The protein operates within cofactor biosynthesis; coenzyme A biosynthesis; CoA from (R)-pantothenate: step 5/5. Functionally, catalyzes the phosphorylation of the 3'-hydroxyl group of dephosphocoenzyme A to form coenzyme A. The chain is Dephospho-CoA kinase from Frankia casuarinae (strain DSM 45818 / CECT 9043 / HFP020203 / CcI3).